The following is a 157-amino-acid chain: 2-C-methyl-D-erythritol 2,4-cyclodiphosphate synthase (157 aa).

2 residues coordinate a divalent metal cation: aspartate 8 and histidine 10. 4-CDP-2-C-methyl-D-erythritol 2-phosphate is bound by residues 8 to 10 and 34 to 35; these read DVH and HS. Residue histidine 42 participates in a divalent metal cation binding. Residues 56–58, 61–65, 100–106, 132–135, and phenylalanine 139 contribute to the 4-CDP-2-C-methyl-D-erythritol 2-phosphate site; these read DIG, FPDTD, AQKPKMA, and TTTE.

It belongs to the IspF family. In terms of assembly, homotrimer. A divalent metal cation is required as a cofactor.

The catalysed reaction is 4-CDP-2-C-methyl-D-erythritol 2-phosphate = 2-C-methyl-D-erythritol 2,4-cyclic diphosphate + CMP. Its pathway is isoprenoid biosynthesis; isopentenyl diphosphate biosynthesis via DXP pathway; isopentenyl diphosphate from 1-deoxy-D-xylulose 5-phosphate: step 4/6. Functionally, involved in the biosynthesis of isopentenyl diphosphate (IPP) and dimethylallyl diphosphate (DMAPP), two major building blocks of isoprenoid compounds. Catalyzes the conversion of 4-diphosphocytidyl-2-C-methyl-D-erythritol 2-phosphate (CDP-ME2P) to 2-C-methyl-D-erythritol 2,4-cyclodiphosphate (ME-CPP) with a corresponding release of cytidine 5-monophosphate (CMP). The protein is 2-C-methyl-D-erythritol 2,4-cyclodiphosphate synthase of Alkaliphilus oremlandii (strain OhILAs) (Clostridium oremlandii (strain OhILAs)).